The primary structure comprises 764 residues: ATP-dependent DNA helicase DDM1 (764 aa).

The interval 1–42 is disordered; sequence MVSLRSRKVIPASEMVSDGKTEKDASGDSPTSVLNEEENCEE. Residues 17-26 show a composition bias toward basic and acidic residues; that stretch reads SDGKTEKDAS. Residues 62–88 are a coiled coil; that stretch reads LISEAMAQEEEQLLKLREDEEKANNAG. The segment at 129–152 is disordered; sequence IESESQKAEPEKTGRGRKRKAASQ. A compositionally biased stretch (basic and acidic residues) spans 132–142; it reads ESQKAEPEKTG. The Nuclear localization signal 1 signature appears at 145 to 152; the sequence is RKRKAASQ. The Helicase ATP-binding domain occupies 214-382; that stretch reads ISLWQNGLNG…WSLLNFILPD (169 aa). Position 227 to 234 (227 to 234) interacts with ATP; the sequence is DQMGLGKT. The short motif at 333–336 is the DEAH box element; the sequence is DEGH. The short motif at 429–436 is the Nuclear localization signal 2 element; it reads LRRMKCDV. The Helicase C-terminal domain occupies 528-695; sequence LLERLLVRLF…STPLEEEDIL (168 aa).

The protein belongs to the SNF2/RAD54 helicase family. Interacts with the MBD domains of MBD2, MBD5 and MBD6.

It is found in the nucleus. It carries out the reaction ATP + H2O = ADP + phosphate + H(+). ATPase activity is stimulated 3-fold by DNA (both free and nucleosomal) binding. ATP-dependent DNA helicase that plays a role in formation, organization, stability and heritability of heterochromatin and thus regulates several physiological traits. Binds to the nucleosome and promotes chromatin remodeling in an ATP-dependent manner; induces nucleosome repositioning on a short DNA fragment, and, possibly, could be guided to target sites (including silent transposable elements) by small interfering RNAs (siRNAs). Can bind both free and nucleosomal DNA. Required for the heritable maintenance of genome integrity and transcriptional gene silencing (TGS), including homology-dependent gene silencing (HDG silencing), via the maintenance of DNA methylation (mostly on cytosine, in both CpG and CpHpG sites, where H is A, T or C) and of histone methylation (e.g. chromatin methylation). May facilitate localization of MBD proteins at specific nuclear domains. Necessary for the maintenance of the genomic imprint at the MEA locus, especially for the silencing of paternally inherited MEA locus. Plays a major role in the inactivation maintenance of retrotransposons (e.g. Tar17, SINE, LINE, ATLN39, CAC1 (CACTAs), Athila elements, and mutator-like elements MULEs and TIR-MULEs) and the silencing of repeated genes and transgenes (e.g. T-DNA insertions). Required for KYP-dependent histone H3 'Lys-9' (H3K9me) methylation, deacetylation of histone H4 'Lys-16' (H4K16) and MET1-dependent DNA methylation. Involved in the chromatin organization of 5S rRNA genes (localized in the pericentromeric heterochromatin of chromosomes 3, 4, and 5) modifications during heterochromatin establishment. Prevents siRNA accumulation (siRNA are probably involved in epigenetic inheritance and in 5S rRNA genes regulation by silencing). Required during plant organogenesis and development, as well as during seed formation. In Arabidopsis thaliana (Mouse-ear cress), this protein is ATP-dependent DNA helicase DDM1 (DDM1).